Here is a 296-residue protein sequence, read N- to C-terminus: Urease operon transcriptional activator (296 aa).

One can recognise an HTH araC/xylS-type domain in the interval 171 to 268 (QAITHLITQE…NMTPSQFRLQ (98 aa)). DNA-binding regions (H-T-H motif) lie at residues 188–209 (DDVA…NREG) and 235–258 (VFQI…KRKY).

Positive regulator of the expression of the urease operon. The polypeptide is Urease operon transcriptional activator (ureR) (Escherichia coli).